A 131-amino-acid chain; its full sequence is Small ribosomal subunit protein bS6 (131 aa).

Residues 96 to 131 form a disordered region; that stretch reads VTAPSPMMKEEKSKSLLAKDEAAAPAPAPATEQATA. Residues 103–117 show a composition bias toward basic and acidic residues; that stretch reads MKEEKSKSLLAKDEA. Residues 118-131 show a composition bias toward low complexity; that stretch reads AAPAPAPATEQATA.

This sequence belongs to the bacterial ribosomal protein bS6 family.

Functionally, binds together with bS18 to 16S ribosomal RNA. The chain is Small ribosomal subunit protein bS6 from Methylobacillus flagellatus (strain ATCC 51484 / DSM 6875 / VKM B-1610 / KT).